The sequence spans 170 residues: Large ribosomal subunit protein uL15 (170 aa).

Basic and acidic residues predominate over residues 1 to 12; sequence MKLHDLRPAEGS. Residues 1 to 50 form a disordered region; that stretch reads MKLHDLRPAEGSHRKRKRIGRGHGSGKVKTGGKGMMGQKARSGPGPYRTF. Residues 13–26 are compositionally biased toward basic residues; the sequence is HRKRKRIGRGHGSG.

This sequence belongs to the universal ribosomal protein uL15 family. As to quaternary structure, part of the 50S ribosomal subunit.

Binds to the 23S rRNA. The polypeptide is Large ribosomal subunit protein uL15 (Chloroflexus aggregans (strain MD-66 / DSM 9485)).